The sequence spans 286 residues: NAD kinase (286 aa).

D74 serves as the catalytic Proton acceptor. NAD(+) contacts are provided by residues 74-75 (DG), 148-149 (ND), D178, A186, 189-194 (TAYNLS), and Q244.

This sequence belongs to the NAD kinase family. A divalent metal cation is required as a cofactor.

It is found in the cytoplasm. It catalyses the reaction NAD(+) + ATP = ADP + NADP(+) + H(+). Functionally, involved in the regulation of the intracellular balance of NAD and NADP, and is a key enzyme in the biosynthesis of NADP. Catalyzes specifically the phosphorylation on 2'-hydroxyl of the adenosine moiety of NAD to yield NADP. This Campylobacter jejuni subsp. doylei (strain ATCC BAA-1458 / RM4099 / 269.97) protein is NAD kinase.